The following is a 72-amino-acid chain: MAKEDAIEVDGVVQEALPNAMFRVELQNGHEVLAHISGKMRKFYIRILPGDRVKVELSPYDLKRGRITYRMK.

Residues 1–72 enclose the S1-like domain; that stretch reads MAKEDAIEVD…KRGRITYRMK (72 aa).

The protein belongs to the IF-1 family. Component of the 30S ribosomal translation pre-initiation complex which assembles on the 30S ribosome in the order IF-2 and IF-3, IF-1 and N-formylmethionyl-tRNA(fMet); mRNA recruitment can occur at any time during PIC assembly.

It is found in the cytoplasm. Functionally, one of the essential components for the initiation of protein synthesis. Stabilizes the binding of IF-2 and IF-3 on the 30S subunit to which N-formylmethionyl-tRNA(fMet) subsequently binds. Helps modulate mRNA selection, yielding the 30S pre-initiation complex (PIC). Upon addition of the 50S ribosomal subunit IF-1, IF-2 and IF-3 are released leaving the mature 70S translation initiation complex. The chain is Translation initiation factor IF-1 2 from Nitratidesulfovibrio vulgaris (strain DP4) (Desulfovibrio vulgaris).